Here is a 699-residue protein sequence, read N- to C-terminus: D-(-)-3-hydroxybutyrate oligomer hydrolase (699 aa).

The N-terminal stretch at 1–19 (MNPSLCIAVAFACPLSALA) is a signal peptide. The active-site Charge relay system is the Ser-303.

The protein belongs to the D-(-)-3-hydroxybutyrate oligomer hydrolase family.

The protein localises to the secreted. The enzyme catalyses (3R)-hydroxybutanoate dimer + H2O = 2 (R)-3-hydroxybutanoate + H(+). It participates in lipid metabolism; butanoate metabolism. In terms of biological role, participates in the degradation of poly-3-hydroxybutyrate (PHB). It works downstream of poly(3-hydroxybutyrate) depolymerase, hydrolyzing D(-)-3-hydroxybutyrate oligomers of various length (3HB-oligomers) into 3HB-monomers. The protein is D-(-)-3-hydroxybutyrate oligomer hydrolase of Azoarcus sp. (strain BH72).